The primary structure comprises 1130 residues: Integrin alpha-6 (1130 aa).

An N-terminal signal peptide occupies residues 1-23 (MAAAGQLCLLYLSAGLLSRLGAA). Over 24-1050 (FNLDTREDNV…FPSKTVAQYS (1027 aa)) the chain is Extracellular. FG-GAP repeat units follow at residues 30-95 (EDNV…GPCT), 101-166 (NDAD…IEDD), 176-229 (DGRL…FFDM), 283-339 (EQPD…KSAH), 340-402 (LLPE…RWNN), 403-458 (VKPI…GINT), and 459-518 (KPTQ…VTPN). Asn-78 carries an N-linked (GlcNAc...) asparagine glycan. 3 disulfides stabilise this stretch: Cys-86/Cys-94, Cys-131/Cys-154, and Cys-175/Cys-188. 2 N-linked (GlcNAc...) asparagine glycosylation sites follow: Asn-223 and Asn-323. Ca(2+)-binding residues include Asp-363, Asn-365, Asp-367, and Asp-371. The N-linked (GlcNAc...) asparagine glycan is linked to Asn-409. 10 residues coordinate Ca(2+): Asp-425, Asn-427, Asp-429, Tyr-431, Asp-433, Asp-480, Asp-482, Asn-484, Tyr-486, and Asp-488. 4 cysteine pairs are disulfide-bonded: Cys-528-Cys-535, Cys-541-Cys-601, Cys-665-Cys-671, and Cys-765-Cys-776. Residues Asn-770, Asn-787, Asn-930, and Asn-966 are each glycosylated (N-linked (GlcNAc...) asparagine). Intrachain disulfides connect Cys-920–Cys-967 and Cys-973–Cys-978. N-linked (GlcNAc...) asparagine glycosylation occurs at Asn-997. The helical transmembrane segment at 1051–1076 (GVPWWIILVAILAGILMLALLVFILW) threads the bilayer. Residues Val-1059 and Gly-1064 each carry the phosphoserine modification. Residues 1077–1083 (KCGFFKR) are interaction with HPS5. The Cytoplasmic portion of the chain corresponds to 1077–1130 (KCGFFKRSRYDDSVPRYHAVRIRKEEREIKDEKYIDNLEKKQWITKWNENESYS). A lipid anchor (S-palmitoyl cysteine; by DHHC3) is attached at Cys-1078. The GFFKR motif signature appears at 1079–1083 (GFFKR). A Phosphoserine modification is found at Arg-1103.

Belongs to the integrin alpha chain family. Heterodimer of an alpha and a beta subunit. The alpha subunit is composed of a heavy and a light chain linked by a disulfide bond. Alpha-6 associates with either beta-1 (ITGB1) or beta-4 (ITGB4) to form ITGA6:ITGB1 and ITGA6:ITGB4, respectively. ITGA6:ITGB1 is found in a complex with CD9; interaction takes place in oocytes and is involved in sperm-egg fusion. ITGA6:ITGB4 is found in a ternary complex with NRG1 and ERBB3. ITGA6:ITGB4 is found in a ternary complex with IGF1 and IGF1R. ITGA6:ITGB4 interacts with IGF2. Interacts with ADAM9. Interacts with RAB21. Interacts with MDK. ITGA6:ITGB1 interacts with MDK; this interaction mediates MDK-induced neurite outgrowth. Interacts with CD82; this interaction down-regulates ITGA6-mediated cell adhesion. In terms of processing, isoforms containing segment A, but not segment B, are the major targets for PMA-induced phosphorylation. Phosphorylation occurs on 'Ser-1103' of isoform alpha-6X1X2A. Phosphorylation is not required for the induction of integrin alpha-6A/beta-1 high affinity but may reduce the affinity for ligand. Undergoes PLAU-mediated cleavage at residues Arg-634-635-Arg in a time-dependent manner to produce processed integrin alpha-6 (alpha6p). Production of alpha6p enhances prostate cancer cell invasion and migration. Post-translationally, palmitoylation by DHHC3 enhances stability and cell surface expression. Integrin alpha-6/beta-4 is predominantly expressed by epithelia. Isoforms containing segment X1 are ubiquitously expressed. Isoforms containing segment X1X2 are expressed in heart, kidney, placenta, colon, duodenum, myoblasts and myotubes, and in a limited number of cell lines; they are always coexpressed with the ubiquitous isoform containing segment X1. In some tissues (e.g. Salivary gland), isoforms containing cytoplasmic segment A and isoforms containing segment B are detected while in others, only isoforms containing one cytoplasmic segment are found (segment A in epidermis and segment B in kidney). Processed integrin alpha-6: Expressed at low levels in normal prostate tissue with elevated levels in prostate cancer tissue (at protein level).

It is found in the cell membrane. In terms of biological role, integrin alpha-6/beta-1 (ITGA6:ITGB1) is a receptor for laminin on platelets. Integrin alpha-6/beta-1 (ITGA6:ITGB1) is present in oocytes and is involved in sperm-egg fusion. Integrin alpha-6/beta-4 (ITGA6:ITGB4) is a receptor for laminin in epithelial cells and it plays a critical structural role in the hemidesmosome. ITGA6:ITGB4 binds to NRG1 (via EGF domain) and this binding is essential for NRG1-ERBB signaling. ITGA6:ITGB4 binds to IGF1 and this binding is essential for IGF1 signaling. ITGA6:ITGB4 binds to IGF2 and this binding is essential for IGF2 signaling. In Homo sapiens (Human), this protein is Integrin alpha-6 (ITGA6).